The chain runs to 206 residues: Transmembrane 4 L6 family member 19 (206 aa).

Over 1 to 16 the chain is Cytoplasmic; the sequence is MLSFSRVVNCSRTCSR. The helical transmembrane segment at 17-37 threads the bilayer; the sequence is FLGLSLGTASLCAAGANIALL. Topologically, residues 38-54 are extracellular; that stretch reads FPNWDVTYLMRGLIGKH. Residues 55–75 form a helical membrane-spanning segment; sequence AMLGSGLWGGGLMVLLAATLI. Topologically, residues 76–89 are cytoplasmic; that stretch reads SMTGSFSKSAPCLQ. Residues 90 to 110 traverse the membrane as a helical segment; that stretch reads VLIALLSSGLALLGAVICFVT. Topologically, residues 111–171 are extracellular; that stretch reads SGVALKDGPF…PSKAVVWHVA (61 aa). N129 is a glycosylation site (N-linked (GlcNAc...) asparagine). A helical transmembrane segment spans residues 172 to 192; that stretch reads FFSILLCISLLQLLLVAIHLV. Positions 182–192 are important for homodimerization; the sequence is LQLLLVAIHLV. Residues 193–206 lie on the Cytoplasmic side of the membrane; it reads NSILGLFCSFCEKH.

It belongs to the L6 tetraspanin family. As to quaternary structure, may form homodimers and homooligomers. Interacts with integrins ITGAV and ITGB3. Interacts with components of members of the V0 complex of vacuolar(H+)-ATPase (V-ATPase), including ATP6V0B and ATP6V0D2; this interaction inhibits V1-V0 complex assembly. As to expression, predominantly expressed in osteoclasts (at protein level). Also expressed in white adipose tissue, as well as in bone marrow-derived macrophages.

Its subcellular location is the lysosome membrane. It is found in the cytoplasm. The protein resides in the cytoskeleton. It localises to the cell projection. The protein localises to the filopodium. Its function is as follows. Negatively regulates vacuolar (H+)-ATPase (V-ATPase) activity by interacting with members of V-ATPase V0 complex and hence inhibiting V1-V0 assembly. Required for multinucleation during osteoclast differentiation. The polypeptide is Transmembrane 4 L6 family member 19 (Tm4sf19) (Mus musculus (Mouse)).